The sequence spans 603 residues: Translation initiation factor IF-2 (603 aa).

Residues 112-279 (TRPPIITIMG…NINLQAEILD (168 aa)) form the tr-type G domain. Positions 121–128 (GHVDHGKT) are G1. 121 to 128 (GHVDHGKT) lines the GTP pocket. Residues 146–150 (GITQH) are G2. The tract at residues 167–170 (DTPG) is G3. GTP contacts are provided by residues 167 to 171 (DTPGH) and 221 to 224 (NKMD). Positions 221–224 (NKMD) are G4. A G5 region spans residues 257–259 (SAL).

It belongs to the TRAFAC class translation factor GTPase superfamily. Classic translation factor GTPase family. IF-2 subfamily.

The protein localises to the cytoplasm. Functionally, one of the essential components for the initiation of protein synthesis. Protects formylmethionyl-tRNA from spontaneous hydrolysis and promotes its binding to the 30S ribosomal subunits. Also involved in the hydrolysis of GTP during the formation of the 70S ribosomal complex. The polypeptide is Translation initiation factor IF-2 (Mycoplasmopsis pulmonis (strain UAB CTIP) (Mycoplasma pulmonis)).